We begin with the raw amino-acid sequence, 219 residues long: ATP synthase F(0) complex subunit a (219 aa).

A run of 6 helical transmembrane segments spans residues P4–P24, W61–L81, Q90–M110, E124–I144, F172–L192, and L194–Y214.

It belongs to the ATPase A chain family. Component of the ATP synthase complex composed at least of ATP5F1A/subunit alpha, ATP5F1B/subunit beta, ATP5MC1/subunit c (homooctomer), MT-ATP6/subunit a, MT-ATP8/subunit 8, ATP5ME/subunit e, ATP5MF/subunit f, ATP5MG/subunit g, ATP5MK/subunit k, ATP5MJ/subunit j, ATP5F1C/subunit gamma, ATP5F1D/subunit delta, ATP5F1E/subunit epsilon, ATP5PF/subunit F6, ATP5PB/subunit b, ATP5PD/subunit d, ATP5PO/subunit OSCP. ATP synthase complex consists of a soluble F(1) head domain (subunits alpha(3) and beta(3)) - the catalytic core - and a membrane F(0) domain - the membrane proton channel (subunits c, a, 8, e, f, g, k and j). These two domains are linked by a central stalk (subunits gamma, delta, and epsilon) rotating inside the F1 region and a stationary peripheral stalk (subunits F6, b, d, and OSCP). Interacts with DNAJC30; interaction is direct.

It localises to the mitochondrion inner membrane. It carries out the reaction H(+)(in) = H(+)(out). Functionally, subunit a, of the mitochondrial membrane ATP synthase complex (F(1)F(0) ATP synthase or Complex V) that produces ATP from ADP in the presence of a proton gradient across the membrane which is generated by electron transport complexes of the respiratory chain. ATP synthase complex consist of a soluble F(1) head domain - the catalytic core - and a membrane F(1) domain - the membrane proton channel. These two domains are linked by a central stalk rotating inside the F(1) region and a stationary peripheral stalk. During catalysis, ATP synthesis in the catalytic domain of F(1) is coupled via a rotary mechanism of the central stalk subunits to proton translocation. With the subunit c (ATP5MC1), forms the proton-conducting channel in the F(0) domain, that contains two crucial half-channels (inlet and outlet) that facilitate proton movement from the mitochondrial intermembrane space (IMS) into the matrix. Protons are taken up via the inlet half-channel and released through the outlet half-channel, following a Grotthuss mechanism. The protein is ATP synthase F(0) complex subunit a of Oncorhynchus masou (Cherry salmon).